A 379-amino-acid chain; its full sequence is MLCLGLMSGTSADGVDAVLARFQGAPDRPEWQLLSHHHSPYPAALRDELVRIGQGEARPAAALLDLAEAVTEHQALAARGADPDQRASLIGCHGQTLWHRPPSSDKRGASWQLLLAPLLAQLLARPVVHDFRATDLALGGQGAPLVPRADAALIGPGDGWRGVLNLGGIANLTLIPPRWGPQKQESVLGWDCGPANSLIDLAMEQFSDGQQLFDRDGAMAAAGRCDDGMIQRWLREPYFQLSPPKSTGRECFGQEDLRRRLQELESVERADAVATLTGFTAAVVAQDLDRLRADRSIHLLELLVAGGGCRNPVLMSELQRRCRGLAVRASDQIGLAAEAREALVFALLAWWHHRGHPGNAPAITGATREACLGVRVAPA.

9-16 lines the ATP pocket; that stretch reads GTSADGVD.

This sequence belongs to the anhydro-N-acetylmuramic acid kinase family.

It catalyses the reaction 1,6-anhydro-N-acetyl-beta-muramate + ATP + H2O = N-acetyl-D-muramate 6-phosphate + ADP + H(+). The protein operates within amino-sugar metabolism; 1,6-anhydro-N-acetylmuramate degradation. It functions in the pathway cell wall biogenesis; peptidoglycan recycling. Catalyzes the specific phosphorylation of 1,6-anhydro-N-acetylmuramic acid (anhMurNAc) with the simultaneous cleavage of the 1,6-anhydro ring, generating MurNAc-6-P. Is required for the utilization of anhMurNAc either imported from the medium or derived from its own cell wall murein, and thus plays a role in cell wall recycling. This is Anhydro-N-acetylmuramic acid kinase from Parasynechococcus marenigrum (strain WH8102).